We begin with the raw amino-acid sequence, 20 residues long: Trypsin inhibitor DE-3 (20 aa).

Belongs to the protease inhibitor I3 (leguminous Kunitz-type inhibitor) family.

Inhibition of trypsin. This chain is Trypsin inhibitor DE-3, found in Erythrina corallodendron (Coral tree).